The chain runs to 251 residues: 3-dehydroquinate dehydratase (251 aa).

Residues 47-49 (EWR) and R83 contribute to the 3-dehydroquinate site. The active-site Proton donor/acceptor is the H144. K171 (schiff-base intermediate with substrate) is an active-site residue. 3-dehydroquinate is bound by residues R214, S233, and Q237.

This sequence belongs to the type-I 3-dehydroquinase family. Homodimer.

It catalyses the reaction 3-dehydroquinate = 3-dehydroshikimate + H2O. It participates in metabolic intermediate biosynthesis; chorismate biosynthesis; chorismate from D-erythrose 4-phosphate and phosphoenolpyruvate: step 3/7. Functionally, involved in the third step of the chorismate pathway, which leads to the biosynthesis of aromatic amino acids. Catalyzes the cis-dehydration of 3-dehydroquinate (DHQ) and introduces the first double bond of the aromatic ring to yield 3-dehydroshikimate. This is 3-dehydroquinate dehydratase from Klebsiella pneumoniae (strain 342).